The following is a 367-amino-acid chain: Beta sliding clamp (367 aa).

It belongs to the beta sliding clamp family. In terms of assembly, forms a ring-shaped head-to-tail homodimer around DNA which binds and tethers DNA polymerases and other proteins to the DNA. The DNA replisome complex has a single clamp-loading complex (3 tau and 1 each of delta, delta', psi and chi subunits) which binds 3 Pol III cores (1 core on the leading strand and 2 on the lagging strand) each with a beta sliding clamp dimer. Additional proteins in the replisome are other copies of gamma, psi and chi, Ssb, DNA helicase and RNA primase.

It is found in the cytoplasm. Confers DNA tethering and processivity to DNA polymerases and other proteins. Acts as a clamp, forming a ring around DNA (a reaction catalyzed by the clamp-loading complex) which diffuses in an ATP-independent manner freely and bidirectionally along dsDNA. Initially characterized for its ability to contact the catalytic subunit of DNA polymerase III (Pol III), a complex, multichain enzyme responsible for most of the replicative synthesis in bacteria; Pol III exhibits 3'-5' exonuclease proofreading activity. The beta chain is required for initiation of replication as well as for processivity of DNA replication. This is Beta sliding clamp (dnaN) from Pseudomonas aeruginosa (strain ATCC 15692 / DSM 22644 / CIP 104116 / JCM 14847 / LMG 12228 / 1C / PRS 101 / PAO1).